A 492-amino-acid chain; its full sequence is Glutamyl-tRNA(Gln) amidotransferase subunit A (492 aa).

Active-site charge relay system residues include Lys77 and Ser152. Ser176 acts as the Acyl-ester intermediate in catalysis.

It belongs to the amidase family. GatA subfamily. Heterotrimer of A, B and C subunits.

It catalyses the reaction L-glutamyl-tRNA(Gln) + L-glutamine + ATP + H2O = L-glutaminyl-tRNA(Gln) + L-glutamate + ADP + phosphate + H(+). Functionally, allows the formation of correctly charged Gln-tRNA(Gln) through the transamidation of misacylated Glu-tRNA(Gln) in organisms which lack glutaminyl-tRNA synthetase. The reaction takes place in the presence of glutamine and ATP through an activated gamma-phospho-Glu-tRNA(Gln). The sequence is that of Glutamyl-tRNA(Gln) amidotransferase subunit A (gatA) from Chlamydia pneumoniae (Chlamydophila pneumoniae).